The chain runs to 283 residues: Zip homologous protein 4 (283 aa).

Residues 6-50 (CFRCYKFPSKQIEFYLTNCMHMFCIECERLCHPPEEEPLKCIQCS) form an RING-type zinc finger. Disordered stretches follow at residues 149-175 (KKQL…SSRS) and 201-283 (TKAQ…RNSQ). Residues 163-175 (PRSNSLKVASSRS) are compositionally biased toward polar residues. A compositionally biased stretch (low complexity) spans 202 to 216 (KAQAKAEAEAEAPAK). Over residues 220–235 (SKAQTTKCTSNYQSHP) the composition is skewed to polar residues. Basic and acidic residues predominate over residues 267 to 283 (KKHEAQREKHKEHRNSQ).

Interacts with zhp-3; the interaction is required for their localization along paired chromosomes and stability, and for the formation of chiasma during meiotic recombination. As to expression, expressed in the germline.

Its subcellular location is the chromosome. In terms of biological role, recruited co-dependently with zhp-3 to the synaptonemal complex between homologous chromosome pairs to regulate the formation and number of crossover events between homologs during meiotic recombination. In the early stages of pachytene, in complex with zhp-4, recruited by the zhp-1-zhp-2 heterodimer to designated crossover sites along the recombination intermediate to stabilize other pro-crossover factors such as rmh-1, msh-5 and cosa-1. This in turn facilitates crossover and promotes the formation of chiasma in each meiotic nucleus at the late pachytene stage of meiosis. Negatively regulates double strand break formation to promote formation of the crossover intermediate. The sequence is that of Zip homologous protein 4 from Caenorhabditis elegans.